We begin with the raw amino-acid sequence, 137 residues long: Methylglyoxal synthase (137 aa).

The MGS-like domain occupies 1 to 137; it reads MKIALIAHDK…NLVRGGEPNV (137 aa). Substrate is bound by residues His8, Lys12, 34–37, and 54–55; these read TGTT and SG. The active-site Proton donor/acceptor is Asp60. His87 is a substrate binding site.

The protein belongs to the methylglyoxal synthase family.

The enzyme catalyses dihydroxyacetone phosphate = methylglyoxal + phosphate. In terms of biological role, catalyzes the formation of methylglyoxal from dihydroxyacetone phosphate. This is Methylglyoxal synthase from Bacillus velezensis (strain DSM 23117 / BGSC 10A6 / LMG 26770 / FZB42) (Bacillus amyloliquefaciens subsp. plantarum).